We begin with the raw amino-acid sequence, 445 residues long: tRNA(Ile2) 2-agmatinylcytidine synthetase TiaS (445 aa).

A DNA-binding region (OB) is located at residues 278–349 (VVVRGSVAEK…KDGLVLNAEY (72 aa)).

It belongs to the TiaS family.

Its subcellular location is the cytoplasm. It catalyses the reaction cytidine(34) in tRNA(Ile2) + agmatine + ATP + H2O = 2-agmatinylcytidine(34) in tRNA(Ile2) + AMP + 2 phosphate + 2 H(+). ATP-dependent agmatine transferase that catalyzes the formation of 2-agmatinylcytidine (agm2C) at the wobble position (C34) of tRNA(Ile2), converting the codon specificity from AUG to AUA. The polypeptide is tRNA(Ile2) 2-agmatinylcytidine synthetase TiaS (Thermofilum pendens (strain DSM 2475 / Hrk 5)).